The sequence spans 412 residues: Serine hydroxymethyltransferase (412 aa).

(6S)-5,6,7,8-tetrahydrofolate is bound by residues leucine 117 and 121 to 123 (GHL). The residue at position 226 (lysine 226) is an N6-(pyridoxal phosphate)lysine. (6S)-5,6,7,8-tetrahydrofolate-binding positions include glutamate 242 and 350 to 352 (SPF).

Belongs to the SHMT family. In terms of assembly, homodimer. The cofactor is pyridoxal 5'-phosphate.

It localises to the cytoplasm. It carries out the reaction (6R)-5,10-methylene-5,6,7,8-tetrahydrofolate + glycine + H2O = (6S)-5,6,7,8-tetrahydrofolate + L-serine. The protein operates within one-carbon metabolism; tetrahydrofolate interconversion. Its pathway is amino-acid biosynthesis; glycine biosynthesis; glycine from L-serine: step 1/1. Its function is as follows. Catalyzes the reversible interconversion of serine and glycine with tetrahydrofolate (THF) serving as the one-carbon carrier. Also exhibits THF-independent aldolase activity toward beta-hydroxyamino acids, producing glycine and aldehydes, via a retro-aldol mechanism. The polypeptide is Serine hydroxymethyltransferase (Methanosarcina acetivorans (strain ATCC 35395 / DSM 2834 / JCM 12185 / C2A)).